The following is a 90-amino-acid chain: [Leu8]-phyllolitorin (90 aa).

The N-terminal stretch at 1 to 30 is a signal peptide; sequence MSAVPFTRVLLISGFLAHLLLSTFVTLTVC. Residues 31–48 constitute a propeptide that is removed on maturation; the sequence is KEVTEESDDLSKRNVLQR. The residue at position 49 (Gln-49) is a Pyrrolidone carboxylic acid. The residue at position 57 (Met-57) is a Methionine amide. The propeptide occupies 61–90; it reads SLENTNRRSDEDMEISALFRGSPLKVKRSD.

The protein belongs to the bombesin/neuromedin-B/ranatensin family. In terms of tissue distribution, expressed by the skin glands.

The protein resides in the secreted. This Phyllomedusa sauvagei (Sauvage's leaf frog) protein is [Leu8]-phyllolitorin.